The primary structure comprises 652 residues: Threonine--tRNA ligase (652 aa).

Residues 1 to 61 (MIKLKLPDGS…DRDAEVEIVT (61 aa)) enclose the TGS domain. A catalytic region spans residues 243 to 548 (DHRKIGREMD…LIENYEGRFP (306 aa)). The Zn(2+) site is built by Cys348, His399, and His525.

This sequence belongs to the class-II aminoacyl-tRNA synthetase family. Homodimer. Zn(2+) serves as cofactor.

Its subcellular location is the cytoplasm. The enzyme catalyses tRNA(Thr) + L-threonine + ATP = L-threonyl-tRNA(Thr) + AMP + diphosphate + H(+). Its function is as follows. Catalyzes the attachment of threonine to tRNA(Thr) in a two-step reaction: L-threonine is first activated by ATP to form Thr-AMP and then transferred to the acceptor end of tRNA(Thr). Also edits incorrectly charged L-seryl-tRNA(Thr). This Parvibaculum lavamentivorans (strain DS-1 / DSM 13023 / NCIMB 13966) protein is Threonine--tRNA ligase.